A 351-amino-acid polypeptide reads, in one-letter code: Fruit bromelain (351 aa).

The N-terminal stretch at 1–24 (MASKVQLVFLFLFLCAMWASPSAA) is a signal peptide. The propeptide at 25–121 (SRDEPNDPMM…VVSFDDVNIS (97 aa)) is activation peptide. Residue Asn119 is glycosylated (N-linked (GlcNAc...) asparagine). Cystine bridges form between Cys144/Cys184, Cys178/Cys217, and Cys273/Cys325. The active site involves Cys147. Active-site residues include His279 and Asn300.

This sequence belongs to the peptidase C1 family.

It catalyses the reaction Hydrolysis of proteins with broad specificity for peptide bonds. Bz-Phe-Val-Arg-|-NHMec is a good synthetic substrate, but there is no action on Z-Arg-Arg-|-NHMec (cf. stem bromelain).. Functionally, cysteine proteinase with a high level of diversity in substrate specificity. This is Fruit bromelain from Ananas comosus (Pineapple).